We begin with the raw amino-acid sequence, 311 residues long: Methionyl-tRNA formyltransferase (311 aa).

A (6S)-5,6,7,8-tetrahydrofolate-binding site is contributed by 110 to 113 (SLLP).

It belongs to the Fmt family.

It catalyses the reaction L-methionyl-tRNA(fMet) + (6R)-10-formyltetrahydrofolate = N-formyl-L-methionyl-tRNA(fMet) + (6S)-5,6,7,8-tetrahydrofolate + H(+). Its function is as follows. Attaches a formyl group to the free amino group of methionyl-tRNA(fMet). The formyl group appears to play a dual role in the initiator identity of N-formylmethionyl-tRNA by promoting its recognition by IF2 and preventing the misappropriation of this tRNA by the elongation apparatus. This Streptococcus pneumoniae serotype 19F (strain G54) protein is Methionyl-tRNA formyltransferase.